A 221-amino-acid chain; its full sequence is Ribosomal RNA small subunit methyltransferase Nep1 (221 aa).

S-adenosyl-L-methionine-binding positions include glycine 174, glycine 179, and 196–201; that span reads VGDEPL.

This sequence belongs to the class IV-like SAM-binding methyltransferase superfamily. RNA methyltransferase NEP1 family. As to quaternary structure, homodimer.

The catalysed reaction is a pseudouridine in rRNA + S-adenosyl-L-methionine = an N(1)-methylpseudouridine in rRNA + S-adenosyl-L-homocysteine + H(+). In terms of biological role, methyltransferase involved in ribosomal biogenesis. Specifically catalyzes the N1-methylation of the pseudouridine corresponding to position 914 in M.jannaschii 16S rRNA. The sequence is that of Ribosomal RNA small subunit methyltransferase Nep1 from Pyrobaculum neutrophilum (strain DSM 2338 / JCM 9278 / NBRC 100436 / V24Sta) (Thermoproteus neutrophilus).